Here is an 84-residue protein sequence, read N- to C-terminus: Putative protein BCE-1 (84 aa).

The chain is Putative protein BCE-1 (BCE1) from Homo sapiens (Human).